The sequence spans 135 residues: MVLWQSDLRVSWRAQWLSLLIHGLVAAVILLMPWPLSYTPLWMVLLSLVVFDCVRSQRRINARQGEIRLLMDGRLRWQGQEWSIVKAPWMIKSGMMLRLRSDGGKRQHLWLAADSMDEAEWRDLRRILLQQETQR.

At 1–11 (MVLWQSDLRVS) the chain is on the cytoplasmic side. Residues 1 to 96 (MVLWQSDLRV…APWMIKSGMM (96 aa)) form a not required to inhibit FtsZ or MreB polymerization region. A helical transmembrane segment spans residues 12–32 (WRAQWLSLLIHGLVAAVILLM). The Periplasmic segment spans residues 33–37 (PWPLS). A helical membrane pass occupies residues 38 to 54 (YTPLWMVLLSLVVFDCV). Residues 55 to 135 (RSQRRINARQ…RILLQQETQR (81 aa)) lie on the Cytoplasmic side of the membrane.

As to quaternary structure, interacts with MreB and FtsZ; interaction with the latter requires FtsZ residues 33-49.

It is found in the cell inner membrane. Its function is as follows. A probable inner membrane protein. Has been shown not to be a toxin, no effects on growth are seen in LB or minimal medium up to 6 or 21 hours (respectively) after induction of expression. Interacts with cytoskeletal proteins FtsZ and MreB; inhibits FtsZ GTP-dependent polymerization as well as MreB ATP-dependent polymerization. Restores production of prodigiosin antibiotic (Pig) in Serratia strains with deletions of sdhE-ygfX; overexpression of this protein and CptB also restores Pig production to a slightly lesser extent in Serratia. The polypeptide is Inner membrane protein YgfX (Escherichia coli (strain K12)).